The chain runs to 355 residues: Beta-ketoacyl-[acyl-carrier-protein] synthase III (355 aa).

Catalysis depends on residues Cys122 and His280. Residues 281–285 (QANMR) form an ACP-binding region. Asn311 is an active-site residue.

It belongs to the thiolase-like superfamily. FabH family. As to quaternary structure, homodimer.

Its subcellular location is the cytoplasm. The catalysed reaction is malonyl-[ACP] + acetyl-CoA + H(+) = 3-oxobutanoyl-[ACP] + CO2 + CoA. Its pathway is lipid metabolism; fatty acid biosynthesis. Its function is as follows. Catalyzes the condensation reaction of fatty acid synthesis by the addition to an acyl acceptor of two carbons from malonyl-ACP. Catalyzes the first condensation reaction which initiates fatty acid synthesis and may therefore play a role in governing the total rate of fatty acid production. Possesses both acetoacetyl-ACP synthase and acetyl transacylase activities. Its substrate specificity determines the biosynthesis of branched-chain and/or straight-chain of fatty acids. This is Beta-ketoacyl-[acyl-carrier-protein] synthase III from Kocuria rhizophila (strain ATCC 9341 / DSM 348 / NBRC 103217 / DC2201).